Here is a 153-residue protein sequence, read N- to C-terminus: NADPH-dependent 7-cyano-7-deazaguanine reductase (153 aa).

The tract at residues 1–22 (MTDNRYDNLGQLGTSTPLPDNP) is disordered. The Thioimide intermediate role is filled by C51. Catalysis depends on D58, which acts as the Proton donor. Substrate-binding positions include 73 to 75 (VES) and 92 to 93 (HE).

The protein belongs to the GTP cyclohydrolase I family. QueF type 1 subfamily.

The protein resides in the cytoplasm. The catalysed reaction is 7-aminomethyl-7-carbaguanine + 2 NADP(+) = 7-cyano-7-deazaguanine + 2 NADPH + 3 H(+). It functions in the pathway tRNA modification; tRNA-queuosine biosynthesis. In terms of biological role, catalyzes the NADPH-dependent reduction of 7-cyano-7-deazaguanine (preQ0) to 7-aminomethyl-7-deazaguanine (preQ1). This chain is NADPH-dependent 7-cyano-7-deazaguanine reductase, found in Maricaulis maris (strain MCS10) (Caulobacter maris).